Consider the following 125-residue polypeptide: Glycine cleavage system H protein (125 aa).

Positions 23 to 104 (VVYIGITDYA…PYENWILKVK (82 aa)) constitute a Lipoyl-binding domain. Lys64 carries the post-translational modification N6-lipoyllysine.

Belongs to the GcvH family. As to quaternary structure, the glycine cleavage system is composed of four proteins: P, T, L and H. The cofactor is (R)-lipoate.

Functionally, the glycine cleavage system catalyzes the degradation of glycine. The H protein shuttles the methylamine group of glycine from the P protein to the T protein. The protein is Glycine cleavage system H protein of Clostridioides difficile (strain 630) (Peptoclostridium difficile).